The chain runs to 398 residues: Trans-2-enoyl-CoA reductase [NADH] (398 aa).

NAD(+) contacts are provided by residues 47 to 52, 74 to 75, 111 to 112, and 139 to 140; these read GASSGF, YE, DA, and LA. Tyr-225 is a binding site for substrate. The Proton donor role is filled by Tyr-235. Residues Lys-244 and 274–276 each bind NAD(+); that span reads LVT.

The protein belongs to the TER reductase family. Monomer.

It carries out the reaction a 2,3-saturated acyl-CoA + NAD(+) = a (2E)-enoyl-CoA + NADH + H(+). It functions in the pathway lipid metabolism; fatty acid biosynthesis. Functionally, involved in the fatty acid synthesis (FAS II). Catalyzes the reduction of the carbon-carbon double bond of crotonyl-CoA to yield butyryl-CoA. This Clostridium acetobutylicum (strain ATCC 824 / DSM 792 / JCM 1419 / IAM 19013 / LMG 5710 / NBRC 13948 / NRRL B-527 / VKM B-1787 / 2291 / W) protein is Trans-2-enoyl-CoA reductase [NADH].